The chain runs to 50 residues: Sperm protamine P1 (50 aa).

2 disulfides stabilise this stretch: Cys7–Cys15 and Cys38–Cys46.

Belongs to the protamine P1 family. In terms of assembly, cross-linked by interchain disulfide bonds around the DNA-helix. Testis.

The protein resides in the nucleus. Its subcellular location is the chromosome. Protamines substitute for histones in the chromatin of sperm during the haploid phase of spermatogenesis. They compact sperm DNA into a highly condensed, stable and inactive complex. This Equus asinus (Donkey) protein is Sperm protamine P1 (PRM1).